We begin with the raw amino-acid sequence, 387 residues long: Aminodeoxyfutalosine synthase (387 aa).

The 228-residue stretch at 52–279 folds into the Radical SAM core domain; the sequence is VHFNVNRHLN…ARTQMATGAE (228 aa). The [4Fe-4S] cluster site is built by C66, C70, and C73.

Belongs to the radical SAM superfamily. MqnE family. [4Fe-4S] cluster serves as cofactor.

It catalyses the reaction 3-[(1-carboxyvinyl)-oxy]benzoate + S-adenosyl-L-methionine + H2O = 6-amino-6-deoxyfutalosine + hydrogencarbonate + L-methionine + H(+). The protein operates within quinol/quinone metabolism; menaquinone biosynthesis. Radical SAM enzyme that catalyzes the addition of the adenosyl radical to the double bond of 3-[(1-carboxyvinyl)oxy]benzoate, leading to aminodeoxyfutalosine (AFL), a key intermediate in the formation of menaquinone (MK, vitamin K2) from chorismate. The chain is Aminodeoxyfutalosine synthase from Streptomyces coelicolor (strain ATCC BAA-471 / A3(2) / M145).